The following is a 183-amino-acid chain: MAYVPRLRQEYNERVKSALKEEFSYSNIMEVPKLTKIVISRGVGGAVADKKLIDHAIDELSAISGQKAVSTISKKDVASFKLRKGMPIGAKVTLRGYRMYEFLDRLITSALPRVRDFNGIKSNGFDGRGNYNLGVTEQIIFPEIDIDAVNRIAGMDITFVTTADTDKEAKALLTELGLPFKKN.

Belongs to the universal ribosomal protein uL5 family. In terms of assembly, part of the 50S ribosomal subunit; part of the 5S rRNA/L5/L18/L25 subcomplex. Contacts the 5S rRNA and the P site tRNA. Forms a bridge to the 30S subunit in the 70S ribosome.

Its function is as follows. This is one of the proteins that bind and probably mediate the attachment of the 5S RNA into the large ribosomal subunit, where it forms part of the central protuberance. In the 70S ribosome it contacts protein S13 of the 30S subunit (bridge B1b), connecting the 2 subunits; this bridge is implicated in subunit movement. Contacts the P site tRNA; the 5S rRNA and some of its associated proteins might help stabilize positioning of ribosome-bound tRNAs. The chain is Large ribosomal subunit protein uL5 from Christiangramia forsetii (strain DSM 17595 / CGMCC 1.15422 / KT0803) (Gramella forsetii).